A 153-amino-acid polypeptide reads, in one-letter code: Aspartate carbamoyltransferase regulatory chain (153 aa).

Residues Cys109, Cys114, Cys135, and Cys138 each contribute to the Zn(2+) site.

This sequence belongs to the PyrI family. As to quaternary structure, contains catalytic and regulatory chains. Zn(2+) is required as a cofactor.

Functionally, involved in allosteric regulation of aspartate carbamoyltransferase. In Natronomonas pharaonis (strain ATCC 35678 / DSM 2160 / CIP 103997 / JCM 8858 / NBRC 14720 / NCIMB 2260 / Gabara) (Halobacterium pharaonis), this protein is Aspartate carbamoyltransferase regulatory chain.